A 427-amino-acid polypeptide reads, in one-letter code: Enolase 2 (427 aa).

Glutamine 165 is a binding site for (2R)-2-phosphoglycerate. Residue glutamate 207 is the Proton donor of the active site. Mg(2+)-binding residues include aspartate 244, glutamate 287, and aspartate 314. (2R)-2-phosphoglycerate-binding residues include lysine 339, arginine 368, serine 369, and lysine 390. The active-site Proton acceptor is lysine 339.

Belongs to the enolase family. Component of the RNA degradosome, a multiprotein complex involved in RNA processing and mRNA degradation. The cofactor is Mg(2+).

It is found in the cytoplasm. It localises to the secreted. The protein resides in the cell surface. The catalysed reaction is (2R)-2-phosphoglycerate = phosphoenolpyruvate + H2O. It participates in carbohydrate degradation; glycolysis; pyruvate from D-glyceraldehyde 3-phosphate: step 4/5. Catalyzes the reversible conversion of 2-phosphoglycerate (2-PG) into phosphoenolpyruvate (PEP). It is essential for the degradation of carbohydrates via glycolysis. This is Enolase 2 from Pseudomonas syringae pv. syringae (strain B728a).